We begin with the raw amino-acid sequence, 267 residues long: UPF0173 metal-dependent hydrolase THEYE_A0282 (267 aa).

This sequence belongs to the UPF0173 family.

The polypeptide is UPF0173 metal-dependent hydrolase THEYE_A0282 (Thermodesulfovibrio yellowstonii (strain ATCC 51303 / DSM 11347 / YP87)).